Reading from the N-terminus, the 162-residue chain is MGLETEKADVQLFMDDDSYSRHSGVDYADPEKFADAGGDRDPNQLNSHLKVGFEDVIAEPESTHSLDKVWICSHALFEVSKYVIYKFLTLFLAIPLAFAAGILFATLSCLHIWIVMPFVKTCLMVLPSVQTIWKSVTDVVIAPLCASVGRSFSSVSMQLSRD.

The Cytoplasmic portion of the chain corresponds to 1 to 86 (MGLETEKADV…FEVSKYVIYK (86 aa)). Phosphotyrosine; by SRC is present on Tyr-19. 2 positions are modified to phosphoserine: Ser-20 and Ser-23. Tyr-27 is subject to Phosphotyrosine; by SRC. An intramembrane region (helical) is located at residues 87 to 107 (FLTLFLAIPLAFAAGILFATL). Residues 108 to 162 (SCLHIWIVMPFVKTCLMVLPSVQTIWKSVTDVVIAPLCASVGRSFSSVSMQLSRD) lie on the Cytoplasmic side of the membrane.

This sequence belongs to the caveolin family. In terms of assembly, monomer or homodimer. Interacts with CAV1; the interaction forms a stable heterooligomeric complex that is required for targeting to lipid rafts and for caveolae formation. Tyrosine phosphorylated forms do not form heterooligomers with the Tyr-19-phosphorylated form existing as a monomer or dimer, and the Tyr-27-form as a monomer only. Interacts (tyrosine phosphorylated form) with the SH2 domain-containing proteins, RASA1, NCK1 and SRC. Interacts (tyrosine phosphorylated form) with INSR, the interaction (Tyr-27-phosphorylated form) is increased on insulin stimulation. Interacts (Tyr-19 phosphorylated form) with MAPK1 (phosphorylated form); the interaction, promoted by insulin, leads to nuclear location and MAPK1 activation. Interacts with STAT3; the interaction is increased on insulin-induced tyrosine phosphorylation leading to STAT activation. Post-translationally, phosphorylated on serine and tyrosine residues. CAV1 promotes phosphorylation on Ser-23 which then targets the complex to the plasma membrane, lipid rafts and caveolae. Phosphorylation on both Tyr-19 and Tyr-27 is required for insulin-induced 'Ser-727' phosphorylation of STAT3 and its activation. Phosphorylation on Tyr-19 is required for insulin-induced phosphorylation of MAPK1 and DNA binding of STAT3. Tyrosine phosphorylation is induced by both EGF and insulin.

It localises to the nucleus. The protein localises to the cytoplasm. The protein resides in the golgi apparatus membrane. It is found in the cell membrane. Its subcellular location is the membrane. It localises to the caveola. May act as a scaffolding protein within caveolar membranes. Interacts directly with G-protein alpha subunits and can functionally regulate their activity. Acts as an accessory protein in conjunction with CAV1 in targeting to lipid rafts and driving caveolae formation. Positive regulator of cellular mitogenesis of the MAPK signaling pathway. Required for the insulin-stimulated nuclear translocation and activation of MAPK1 and STAT3, and the subsequent regulation of cell cycle progression. This chain is Caveolin-2 (CAV2), found in Rhinolophus ferrumequinum (Greater horseshoe bat).